The primary structure comprises 781 residues: Translation initiation factor IF-2 (781 aa).

The segment at 44 to 195 is disordered; the sequence is RQLDNAVDGT…TPPKPKELPE (152 aa). The segment covering 53–65 has biased composition (basic and acidic residues); that stretch reads TNKKAEAPKKETT. The span at 66 to 81 shows a compositional bias: polar residues; that stretch reads SNENGNSKGPNKPNMT. The segment covering 82 to 93 has biased composition (low complexity); it reads NSNEKSNKPNKP. The segment covering 115 to 126 has biased composition (polar residues); sequence KPANTGNQTQAS. Over residues 127 to 169 the composition is skewed to low complexity; that stretch reads GNQQAGGQKRNNNNNSNRPGGGNPNRPGGNNRPNRGGNFNNKG. The 170-residue stretch at 282–451 folds into the tr-type G domain; the sequence is ERPPVVTIMG…LLVSEVEELK (170 aa). Residues 291-298 are G1; the sequence is GHVDHGKT. Residue 291-298 coordinates GTP; it reads GHVDHGKT. The G2 stretch occupies residues 316 to 320; that stretch reads GITQH. The segment at 337–340 is G3; it reads DTPG. GTP contacts are provided by residues 337 to 341 and 391 to 394; these read DTPGH and NKID. The interval 391–394 is G4; it reads NKID. The segment at 427 to 429 is G5; sequence SAK.

The protein belongs to the TRAFAC class translation factor GTPase superfamily. Classic translation factor GTPase family. IF-2 subfamily.

The protein resides in the cytoplasm. In terms of biological role, one of the essential components for the initiation of protein synthesis. Protects formylmethionyl-tRNA from spontaneous hydrolysis and promotes its binding to the 30S ribosomal subunits. Also involved in the hydrolysis of GTP during the formation of the 70S ribosomal complex. The polypeptide is Translation initiation factor IF-2 (Listeria monocytogenes serotype 4a (strain HCC23)).